Here is a 182-residue protein sequence, read N- to C-terminus: R-phycoerythrin subunit beta (182 aa).

C82 is a binding site for (2R,3E)-phycoerythrobilin.

This sequence belongs to the phycobiliprotein family. In terms of assembly, homodimer. In terms of processing, contains one covalently linked phycoerythrobilin chromophore.

Functionally, green-light absorbing phycoerythrin of unknown function. This is R-phycoerythrin subunit beta (cpeB) from Prochlorococcus marinus (strain SARG / CCMP1375 / SS120).